Reading from the N-terminus, the 230-residue chain is Phosphatidylserine decarboxylase proenzyme (230 aa).

Ser186 functions as the Schiff-base intermediate with substrate; via pyruvic acid in the catalytic mechanism. At Ser186 the chain carries Pyruvic acid (Ser); by autocatalysis.

The protein belongs to the phosphatidylserine decarboxylase family. PSD-A subfamily. In terms of assembly, heterodimer of a large membrane-associated beta subunit and a small pyruvoyl-containing alpha subunit. It depends on pyruvate as a cofactor. Is synthesized initially as an inactive proenzyme. Formation of the active enzyme involves a self-maturation process in which the active site pyruvoyl group is generated from an internal serine residue via an autocatalytic post-translational modification. Two non-identical subunits are generated from the proenzyme in this reaction, and the pyruvate is formed at the N-terminus of the alpha chain, which is derived from the carboxyl end of the proenzyme. The post-translation cleavage follows an unusual pathway, termed non-hydrolytic serinolysis, in which the side chain hydroxyl group of the serine supplies its oxygen atom to form the C-terminus of the beta chain, while the remainder of the serine residue undergoes an oxidative deamination to produce ammonia and the pyruvoyl prosthetic group on the alpha chain.

It localises to the cell membrane. The catalysed reaction is a 1,2-diacyl-sn-glycero-3-phospho-L-serine + H(+) = a 1,2-diacyl-sn-glycero-3-phosphoethanolamine + CO2. It participates in phospholipid metabolism; phosphatidylethanolamine biosynthesis; phosphatidylethanolamine from CDP-diacylglycerol: step 2/2. Functionally, catalyzes the formation of phosphatidylethanolamine (PtdEtn) from phosphatidylserine (PtdSer). In Wolbachia pipientis wMel, this protein is Phosphatidylserine decarboxylase proenzyme.